The chain runs to 227 residues: Lipoprotein-releasing system ATP-binding protein LolD (227 aa).

One can recognise an ABC transporter domain in the interval 8-226 (IEVTNLCKSF…VVHMADGRIT (219 aa)). 44–51 (GASGAGKT) contributes to the ATP binding site.

Belongs to the ABC transporter superfamily. Lipoprotein translocase (TC 3.A.1.125) family. As to quaternary structure, the complex is composed of two ATP-binding proteins (LolD) and two transmembrane proteins (LolC and LolE).

Its subcellular location is the cell inner membrane. Its function is as follows. Part of the ABC transporter complex LolCDE involved in the translocation of mature outer membrane-directed lipoproteins, from the inner membrane to the periplasmic chaperone, LolA. Responsible for the formation of the LolA-lipoprotein complex in an ATP-dependent manner. This is Lipoprotein-releasing system ATP-binding protein LolD from Syntrophotalea carbinolica (strain DSM 2380 / NBRC 103641 / GraBd1) (Pelobacter carbinolicus).